Reading from the N-terminus, the 373-residue chain is Histidinol-phosphate aminotransferase 2 (373 aa).

Lys229 is modified (N6-(pyridoxal phosphate)lysine).

The protein belongs to the class-II pyridoxal-phosphate-dependent aminotransferase family. Histidinol-phosphate aminotransferase subfamily. Homodimer. Pyridoxal 5'-phosphate serves as cofactor.

It catalyses the reaction L-histidinol phosphate + 2-oxoglutarate = 3-(imidazol-4-yl)-2-oxopropyl phosphate + L-glutamate. It participates in amino-acid biosynthesis; L-histidine biosynthesis; L-histidine from 5-phospho-alpha-D-ribose 1-diphosphate: step 7/9. In Hydrogenovibrio crunogenus (strain DSM 25203 / XCL-2) (Thiomicrospira crunogena), this protein is Histidinol-phosphate aminotransferase 2.